The primary structure comprises 540 residues: Chaperonin GroEL 2 (540 aa).

Residues 29–32 (TMGP), Lys50, 86–90 (DGTTT), Gly414, and Asp496 each bind ATP.

The protein belongs to the chaperonin (HSP60) family. As to quaternary structure, forms a cylinder of 14 subunits composed of two heptameric rings stacked back-to-back. Interacts with the co-chaperonin GroES.

The protein resides in the cytoplasm. It catalyses the reaction ATP + H2O + a folded polypeptide = ADP + phosphate + an unfolded polypeptide.. Functionally, together with its co-chaperonin GroES, plays an essential role in assisting protein folding. The GroEL-GroES system forms a nano-cage that allows encapsulation of the non-native substrate proteins and provides a physical environment optimized to promote and accelerate protein folding. This chain is Chaperonin GroEL 2, found in Rhodopirellula baltica (strain DSM 10527 / NCIMB 13988 / SH1).